The chain runs to 272 residues: MEKIKIIVASDSIGETAELVARAGISQFNPKQCKNELLRYPYIESFEDVDEVIQVAKDTNAIIVYTLIKPEMKQYMSEKVAEFQLKSVDIMGPLMDLLSASVEEKPYNEPGIVHRLDDAYFKKIDAIEFAVKYDDGKDPKGLPKADIVLLGISRTSKTPLSQYLAHKSYKVMNVPIVPEVTPPDGLYDIDPKKCIALKISEEKLNRIRKERLKQLGLGDTARYATEARIQEELNYFEEIVSEIGCPVIDVSQKAIEETANDIIHYIEQNKSK.

Residue 151–158 participates in ADP binding; that stretch reads GISRTSKT.

It belongs to the pyruvate, phosphate/water dikinase regulatory protein family. PDRP subfamily.

The catalysed reaction is N(tele)-phospho-L-histidyl/L-threonyl-[pyruvate, phosphate dikinase] + ADP = N(tele)-phospho-L-histidyl/O-phospho-L-threonyl-[pyruvate, phosphate dikinase] + AMP + H(+). It catalyses the reaction N(tele)-phospho-L-histidyl/O-phospho-L-threonyl-[pyruvate, phosphate dikinase] + phosphate + H(+) = N(tele)-phospho-L-histidyl/L-threonyl-[pyruvate, phosphate dikinase] + diphosphate. In terms of biological role, bifunctional serine/threonine kinase and phosphorylase involved in the regulation of the pyruvate, phosphate dikinase (PPDK) by catalyzing its phosphorylation/dephosphorylation. This is Putative pyruvate, phosphate dikinase regulatory protein from Staphylococcus aureus (strain Mu3 / ATCC 700698).